Reading from the N-terminus, the 240-residue chain is Biosynthetic peptidoglycan transglycosylase (240 aa).

A helical transmembrane segment spans residues 15 to 35 (WMVYLGAVVAIAWLATQAFYF).

The protein belongs to the glycosyltransferase 51 family.

The protein resides in the cell inner membrane. The catalysed reaction is [GlcNAc-(1-&gt;4)-Mur2Ac(oyl-L-Ala-gamma-D-Glu-L-Lys-D-Ala-D-Ala)](n)-di-trans,octa-cis-undecaprenyl diphosphate + beta-D-GlcNAc-(1-&gt;4)-Mur2Ac(oyl-L-Ala-gamma-D-Glu-L-Lys-D-Ala-D-Ala)-di-trans,octa-cis-undecaprenyl diphosphate = [GlcNAc-(1-&gt;4)-Mur2Ac(oyl-L-Ala-gamma-D-Glu-L-Lys-D-Ala-D-Ala)](n+1)-di-trans,octa-cis-undecaprenyl diphosphate + di-trans,octa-cis-undecaprenyl diphosphate + H(+). The protein operates within cell wall biogenesis; peptidoglycan biosynthesis. In terms of biological role, peptidoglycan polymerase that catalyzes glycan chain elongation from lipid-linked precursors. This is Biosynthetic peptidoglycan transglycosylase from Paraburkholderia phytofirmans (strain DSM 17436 / LMG 22146 / PsJN) (Burkholderia phytofirmans).